The chain runs to 550 residues: Probable endochitinase (550 aa).

Residues 1–16 (MLHYLATILWLAVAHA) form the signal peptide. N-linked (GlcNAc...) asparagine; by host glycans are attached at residues N146 and N172. Residues 147 to 547 (KTVAAYFVEW…NAMNERVRVK (401 aa)) enclose the GH18 domain. E304 acts as the Proton donor in catalysis. Residue N344 is glycosylated (N-linked (GlcNAc...) asparagine; by host). Positions 547–550 (KDEL) match the Prevents secretion from ER motif.

It belongs to the glycosyl hydrolase 18 family. Chitinase class II subfamily.

The protein resides in the host endoplasmic reticulum lumen. It catalyses the reaction Random endo-hydrolysis of N-acetyl-beta-D-glucosaminide (1-&gt;4)-beta-linkages in chitin and chitodextrins.. The sequence is that of Probable endochitinase from Orgyia pseudotsugata (Douglas-fir tussock moth).